The primary structure comprises 39 residues: Cytochrome b559 subunit beta (39 aa).

A helical membrane pass occupies residues 14–30; sequence WLAIHGLAVPTVFFLGS. Histidine 18 serves as a coordination point for heme.

Heterodimer of an alpha subunit and a beta subunit. PSII is composed of 1 copy each of membrane proteins PsbA, PsbB, PsbC, PsbD, PsbE, PsbF, PsbH, PsbI, PsbJ, PsbK, PsbL, PsbM, PsbT, PsbX, PsbY, PsbZ, Psb30/Ycf12, at least 3 peripheral proteins of the oxygen-evolving complex and a large number of cofactors. It forms dimeric complexes. The cofactor is heme b. Post-translationally, the N-terminus is blocked.

It is found in the plastid. The protein localises to the chloroplast thylakoid membrane. In terms of biological role, this b-type cytochrome is tightly associated with the reaction center of photosystem II (PSII). PSII is a light-driven water:plastoquinone oxidoreductase that uses light energy to abstract electrons from H(2)O, generating O(2) and a proton gradient subsequently used for ATP formation. It consists of a core antenna complex that captures photons, and an electron transfer chain that converts photonic excitation into a charge separation. This is Cytochrome b559 subunit beta from Spinacia oleracea (Spinach).